The primary structure comprises 334 residues: Ribosomal RNA small subunit methyltransferase H (334 aa).

S-adenosyl-L-methionine contacts are provided by residues 34–36 (GGY), D52, A87, D100, and Q107.

The protein belongs to the methyltransferase superfamily. RsmH family.

The protein localises to the cytoplasm. The enzyme catalyses cytidine(1402) in 16S rRNA + S-adenosyl-L-methionine = N(4)-methylcytidine(1402) in 16S rRNA + S-adenosyl-L-homocysteine + H(+). In terms of biological role, specifically methylates the N4 position of cytidine in position 1402 (C1402) of 16S rRNA. This Maricaulis maris (strain MCS10) (Caulobacter maris) protein is Ribosomal RNA small subunit methyltransferase H.